A 416-amino-acid polypeptide reads, in one-letter code: Notoamide biosynthesis cluster protein N' (416 aa).

An N-terminal signal peptide occupies residues 1–16; it reads MRAALLTLAFTALAAA. 2 N-linked (GlcNAc...) asparagine glycosylation sites follow: N119 and N262.

Functionally, part of the gene cluster that mediates the biosynthesis of notoamide, a fungal indole alkaloid that belongs to a family of natural products containing a characteristic bicyclo[2.2.2]diazaoctane core. The first step of notoamide biosynthesis involves coupling of L-proline and L-tryptophan by the bimodular NRPS notE', to produce cyclo-L-tryptophan-L-proline called brevianamide F. The reverse prenyltransferase notF' then acts as a deoxybrevianamide E synthase and converts brevianamide F to deoxybrevianamide E via reverse prenylation at C-2 of the indole ring leading to the bicyclo[2.2.2]diazaoctane core. Deoxybrevianamide E is further hydroxylated at C-6 of the indole ring, likely catalyzed by the cytochrome P450 monooxygenase notG', to yield 6-hydroxy-deoxybrevianamide E. 6-hydroxy-deoxybrevianamide E is a specific substrate of the prenyltransferase notC' for normal prenylation at C-7 to produce 6-hydroxy-7-prenyl-deoxybrevianamide, also called notoamide S. As the proposed pivotal branching point in notoamide biosynthesis, notoamide S can be diverted to notoamide E through an oxidative pyran ring closure putatively catalyzed by either notH' cytochrome P450 monooxygenase or the notD' FAD-linked oxidoreductase. This step would be followed by an indole 2,3-epoxidation-initiated pinacol-like rearrangement catalyzed by the notB' FAD-dependent monooxygenase leading to the formation of notoamide C and notoamide D. On the other hand notoamide S is converted to notoamide T by notH' (or notD'), a bifunctional oxidase that also functions as the intramolecular Diels-Alderase responsible for generation of (-)-notoamide T. To generate antipodal (+)-notoaminide T, notH (or notD) in Aspergillus strain MF297-2 is expected to catalyze a Diels-Alder reaction leading to the opposite stereochemistry. The remaining oxidoreductase notD' (or notH') likely catalyzes the oxidative pyran ring formation to yield (-)-stephacidin A. The FAD-dependent monooxygenase notI' is highly similar to notB' and is predicted to catalyze a similar conversion from (-)-stephacidin A to (+)-notoamide B via the 2,3-epoxidation of (-)-stephacidin A followed by a pinacol-type rearrangement. Finally, it remains unclear which enzyme could be responsible for the final hydroxylation steps leading to notoamide A and sclerotiamide. The function of notN' in the notoamide biosynthesis has not been determined yet. In Aspergillus versicolor, this protein is Notoamide biosynthesis cluster protein N'.